Consider the following 460-residue polypeptide: Sexual development regulator velC (460 aa).

3 disordered regions span residues 67 to 131 (VGPD…PQAP), 152 to 216 (YAPR…RPDP), and 422 to 460 (KKGNDRSKNTRSHDDSSDGEQDEGEATLQGKRRRRSARQ). A compositionally biased stretch (polar residues) spans 192–207 (PVTTNGRPPDSNSPMV). Residues 239-422 (LSDNRFNLQI…KEQGCIISIK (184 aa)) enclose the Velvet domain. Residues 423–437 (KGNDRSKNTRSHDDS) are compositionally biased toward basic and acidic residues. The span at 451 to 460 (GKRRRRSARQ) shows a compositional bias: basic residues.

It belongs to the velvet family. VelC subfamily. In terms of assembly, interacts with VE1.

The protein localises to the nucleus. In terms of biological role, velvet-domain-containing protein that acts as a positive regulator of sexual development. Dispensable for regulation of conidial size, hyphal hydrophobicity, fumonisin production, and oxidant resistance. In Gibberella moniliformis (strain M3125 / FGSC 7600) (Maize ear and stalk rot fungus), this protein is Sexual development regulator velC.